A 478-amino-acid polypeptide reads, in one-letter code: UDP-N-acetylmuramate--L-alanine ligase (478 aa).

126–132 (GTHGKTT) lines the ATP pocket.

It belongs to the MurCDEF family.

The protein localises to the cytoplasm. It carries out the reaction UDP-N-acetyl-alpha-D-muramate + L-alanine + ATP = UDP-N-acetyl-alpha-D-muramoyl-L-alanine + ADP + phosphate + H(+). The protein operates within cell wall biogenesis; peptidoglycan biosynthesis. In terms of biological role, cell wall formation. The sequence is that of UDP-N-acetylmuramate--L-alanine ligase from Synechococcus sp. (strain JA-2-3B'a(2-13)) (Cyanobacteria bacterium Yellowstone B-Prime).